The primary structure comprises 85 residues: Large ribosomal subunit protein bL27 (85 aa).

The tract at residues 1 to 21 (MAHKKAGGSTRNGRDSESKRL) is disordered.

This sequence belongs to the bacterial ribosomal protein bL27 family.

This chain is Large ribosomal subunit protein bL27, found in Pseudomonas entomophila (strain L48).